Here is a 558-residue protein sequence, read N- to C-terminus: 2-isopropylmalate synthase (558 aa).

The region spanning 31–306 is the Pyruvate carboxyltransferase domain; it reads PIWCAVDLRD…DPGIDFSNID (276 aa). Asp40, His245, His247, and Asn281 together coordinate Mg(2+). The regulatory domain stretch occupies residues 440-558; that stretch reads AGSPYSFLEH…LCAANHLSDK (119 aa).

The protein belongs to the alpha-IPM synthase/homocitrate synthase family. LeuA type 2 subfamily. Homodimer. The cofactor is Mg(2+).

The protein localises to the cytoplasm. The enzyme catalyses 3-methyl-2-oxobutanoate + acetyl-CoA + H2O = (2S)-2-isopropylmalate + CoA + H(+). Its pathway is amino-acid biosynthesis; L-leucine biosynthesis; L-leucine from 3-methyl-2-oxobutanoate: step 1/4. Functionally, catalyzes the condensation of the acetyl group of acetyl-CoA with 3-methyl-2-oxobutanoate (2-ketoisovalerate) to form 3-carboxy-3-hydroxy-4-methylpentanoate (2-isopropylmalate). This Rhodospirillum rubrum (strain ATCC 11170 / ATH 1.1.1 / DSM 467 / LMG 4362 / NCIMB 8255 / S1) protein is 2-isopropylmalate synthase.